The following is a 191-amino-acid chain: Protein GrpE (191 aa).

A disordered region spans residues 1–49 (MSEEKQTAEQVEAAEQEEVTEQAEQAASQEQHEETAGQEEALQHQIDEL). Residues 12–21 (EAAEQEEVTE) are compositionally biased toward acidic residues. Over residues 30 to 49 (EQHEETAGQEEALQHQIDEL) the composition is skewed to basic and acidic residues.

This sequence belongs to the GrpE family. As to quaternary structure, homodimer.

It is found in the cytoplasm. Participates actively in the response to hyperosmotic and heat shock by preventing the aggregation of stress-denatured proteins, in association with DnaK and GrpE. It is the nucleotide exchange factor for DnaK and may function as a thermosensor. Unfolded proteins bind initially to DnaJ; upon interaction with the DnaJ-bound protein, DnaK hydrolyzes its bound ATP, resulting in the formation of a stable complex. GrpE releases ADP from DnaK; ATP binding to DnaK triggers the release of the substrate protein, thus completing the reaction cycle. Several rounds of ATP-dependent interactions between DnaJ, DnaK and GrpE are required for fully efficient folding. This Bacillus velezensis (strain DSM 23117 / BGSC 10A6 / LMG 26770 / FZB42) (Bacillus amyloliquefaciens subsp. plantarum) protein is Protein GrpE.